A 333-amino-acid polypeptide reads, in one-letter code: Adenosine deaminase (333 aa).

Residues His-12 and His-14 each coordinate Zn(2+). Substrate is bound by residues His-14, Asp-16, and Gly-170. His-197 contributes to the Zn(2+) binding site. Glu-200 functions as the Proton donor in the catalytic mechanism. Residue Asp-278 participates in Zn(2+) binding. Asp-279 provides a ligand contact to substrate.

It belongs to the metallo-dependent hydrolases superfamily. Adenosine and AMP deaminases family. Adenosine deaminase subfamily. The cofactor is Zn(2+).

It catalyses the reaction adenosine + H2O + H(+) = inosine + NH4(+). The catalysed reaction is 2'-deoxyadenosine + H2O + H(+) = 2'-deoxyinosine + NH4(+). In terms of biological role, catalyzes the hydrolytic deamination of adenosine and 2-deoxyadenosine. The sequence is that of Adenosine deaminase from Escherichia coli O139:H28 (strain E24377A / ETEC).